Consider the following 168-residue polypeptide: Transcription elongation factor GreB (168 aa).

A coiled-coil region spans residues 61–84 (KKMLREIDSRVRFLRKRLENLKVV).

This sequence belongs to the GreA/GreB family. GreB subfamily.

In terms of biological role, necessary for efficient RNA polymerase transcription elongation past template-encoded arresting sites. The arresting sites in DNA have the property of trapping a certain fraction of elongating RNA polymerases that pass through, resulting in locked ternary complexes. Cleavage of the nascent transcript by cleavage factors such as GreA or GreB allows the resumption of elongation from the new 3'terminus. GreB releases sequences of up to 9 nucleotides in length. The polypeptide is Transcription elongation factor GreB (Pseudomonas aeruginosa (strain ATCC 15692 / DSM 22644 / CIP 104116 / JCM 14847 / LMG 12228 / 1C / PRS 101 / PAO1)).